Here is a 368-residue protein sequence, read N- to C-terminus: Phosphoserine aminotransferase (368 aa).

R42 is an L-glutamate binding site. Residues 76–77 (AS), W102, T152, D179, and Q202 contribute to the pyridoxal 5'-phosphate site. K203 carries the N6-(pyridoxal phosphate)lysine modification. 245–246 (NT) is a binding site for pyridoxal 5'-phosphate.

This sequence belongs to the class-V pyridoxal-phosphate-dependent aminotransferase family. SerC subfamily. In terms of assembly, homodimer. The cofactor is pyridoxal 5'-phosphate.

It localises to the cytoplasm. It carries out the reaction O-phospho-L-serine + 2-oxoglutarate = 3-phosphooxypyruvate + L-glutamate. It catalyses the reaction 4-(phosphooxy)-L-threonine + 2-oxoglutarate = (R)-3-hydroxy-2-oxo-4-phosphooxybutanoate + L-glutamate. Its pathway is amino-acid biosynthesis; L-serine biosynthesis; L-serine from 3-phospho-D-glycerate: step 2/3. The protein operates within cofactor biosynthesis; pyridoxine 5'-phosphate biosynthesis; pyridoxine 5'-phosphate from D-erythrose 4-phosphate: step 3/5. Catalyzes the reversible conversion of 3-phosphohydroxypyruvate to phosphoserine and of 3-hydroxy-2-oxo-4-phosphonooxybutanoate to phosphohydroxythreonine. This is Phosphoserine aminotransferase from Nitrosomonas europaea (strain ATCC 19718 / CIP 103999 / KCTC 2705 / NBRC 14298).